A 34-amino-acid polypeptide reads, in one-letter code: Photosystem II reaction center protein M (34 aa).

The helical transmembrane segment at 5-25 (ILAFIATALFILIPTAFSLIL) threads the bilayer.

This sequence belongs to the PsbM family. As to quaternary structure, PSII is composed of 1 copy each of membrane proteins PsbA, PsbB, PsbC, PsbD, PsbE, PsbF, PsbH, PsbI, PsbJ, PsbK, PsbL, PsbM, PsbT, PsbX, PsbY, PsbZ, Psb30/Ycf12, at least 3 peripheral proteins of the oxygen-evolving complex and a large number of cofactors. It forms dimeric complexes.

It localises to the plastid. The protein resides in the chloroplast thylakoid membrane. Its function is as follows. One of the components of the core complex of photosystem II (PSII). PSII is a light-driven water:plastoquinone oxidoreductase that uses light energy to abstract electrons from H(2)O, generating O(2) and a proton gradient subsequently used for ATP formation. It consists of a core antenna complex that captures photons, and an electron transfer chain that converts photonic excitation into a charge separation. This subunit is found at the monomer-monomer interface. This is Photosystem II reaction center protein M from Huperzia lucidula (Shining clubmoss).